A 781-amino-acid polypeptide reads, in one-letter code: Arf-GAP with coiled-coil, ANK repeat and PH domain-containing protein 2 (781 aa).

Residues 1–226 (MKVTVDFEEC…MKDLGAQLDQ (226 aa)) enclose the BAR domain. A PH domain is found at 266 to 361 (GIVMEGYLFK…WIKAVQTSIA (96 aa)). A compositionally biased stretch (basic and acidic residues) spans 365 to 378 (REKGDESEKQEKKS). The segment at 365 to 390 (REKGDESEKQEKKSSPSTGSLESGSE) is disordered. Low complexity predominate over residues 379–388 (SPSTGSLESG). Residues 399-521 (ESALQRVQCI…KFVEKQPAAA (123 aa)) enclose the Arf-GAP domain. Residues 414–437 (CCDCGLADPRWASINLGITLCIEC) form a C4-type zinc finger. The disordered stretch occupies residues 520-576 (AAVSPLESRTKVLPQSQEEKRHSAPEKSFLAIEQGAASPRVRSSDSGIQQSVDDSRE). ANK repeat units follow at residues 642–671 (NKATPLIQAVRGGSLVTCEFLLQNGANVNI), 675–704 (KGRGPLHHATVLGHTGQVCLFLKRGANQHA), and 708–737 (DGKDPLSIAVEAANADIVTLLRLARMNEEM).

It localises to the endosome membrane. It is found in the cell membrane. Its activity is regulated as follows. GAP activity stimulated by phosphatidylinositol 4,5-bisphosphate (PIP2) and phosphatidic acid. Functionally, GTPase-activating protein (GAP) for ADP ribosylation factor 6 (ARF6). The polypeptide is Arf-GAP with coiled-coil, ANK repeat and PH domain-containing protein 2 (ACAP2) (Gallus gallus (Chicken)).